Consider the following 370-residue polypeptide: GDSL esterase/lipase At1g09390 (370 aa).

An N-terminal signal peptide occupies residues 1-27 (MATLSLHSHSFLLVLLPFILILRQNLA). Catalysis depends on S44, which acts as the Nucleophile. N90 and N315 each carry an N-linked (GlcNAc...) asparagine glycan. Residues D336 and H339 contribute to the active site.

This sequence belongs to the 'GDSL' lipolytic enzyme family.

The protein localises to the secreted. In Arabidopsis thaliana (Mouse-ear cress), this protein is GDSL esterase/lipase At1g09390.